A 140-amino-acid polypeptide reads, in one-letter code: Large ribosomal subunit protein uL24 (140 aa).

This sequence belongs to the universal ribosomal protein uL24 family. In terms of assembly, part of the 50S ribosomal subunit.

One of two assembly initiator proteins, it binds directly to the 5'-end of the 23S rRNA, where it nucleates assembly of the 50S subunit. Functionally, located at the polypeptide exit tunnel on the outside of the subunit. The protein is Large ribosomal subunit protein uL24 of Nanoarchaeum equitans (strain Kin4-M).